Reading from the N-terminus, the 470-residue chain is Uronate isomerase (470 aa).

Belongs to the metallo-dependent hydrolases superfamily. Uronate isomerase family.

It carries out the reaction D-glucuronate = D-fructuronate. The catalysed reaction is aldehydo-D-galacturonate = keto-D-tagaturonate. It functions in the pathway carbohydrate metabolism; pentose and glucuronate interconversion. In Vibrio vulnificus (strain CMCP6), this protein is Uronate isomerase.